A 210-amino-acid polypeptide reads, in one-letter code: SAP domain-containing ribonucleoprotein (210 aa).

The residue at position 2 (Ala2) is an N-acetylalanine. An SAP domain is found at 8–42 (LHKLKLAELKQECLARGLETKGIKQDLINRLQAYL). Lys10 bears the N6-acetyllysine mark. A compositionally biased stretch (acidic residues) spans 45–64 (HAEEEANEEDVLGDETEEEE). Positions 45-87 (HAEEEANEEDVLGDETEEEEPKPIELPVKEEEPPEKVVDMASE) are disordered. Residues 65 to 87 (PKPIELPVKEEEPPEKVVDMASE) are compositionally biased toward basic and acidic residues. Lys142 bears the N6-acetyllysine mark. Positions 161 to 210 (VSSISRKSEDDEKLKKRKERFGIVTSSAGTGTTEDTEAKKRKRAERFGIA) are disordered. Ser163 is modified (phosphoserine). Positions 184-193 (VTSSAGTGTT) are enriched in polar residues.

It belongs to the SAP domain-containing ribonucleoprotein family. Interacts with DDX39A. Interacts with FUS. Interacts (via the C-terminal domain) with DDX39B; the interaction is direct and facilitates RNA binding of DDX39B. Component of the transcription/export (TREX) complex at least composed of ALYREF/THOC4, DDX39B, SARNP/CIP29, CHTOP and the THO subcomplex; TREX seems to have dynamic structure involving ATP-dependent remodeling; in the complex interacts directly with DDX39B in a ATP-dependent manner which bridges it to ALYREF/THOC4.

It localises to the nucleus. It is found in the nucleus speckle. Functionally, binds both single-stranded and double-stranded DNA with higher affinity for the single-stranded form. Specifically binds to scaffold/matrix attachment region DNA. Also binds single-stranded RNA. Enhances RNA unwinding activity of DDX39A. May participate in important transcriptional or translational control of cell growth, metabolism and carcinogenesis. Component of the TREX complex which is thought to couple mRNA transcription, processing and nuclear export, and specifically associates with spliced mRNA and not with unspliced pre-mRNA. The TREX complex is recruited to spliced mRNAs by a transcription-independent mechanism, binds to mRNA upstream of the exon-junction complex (EJC) and is recruited in a splicing- and cap-dependent manner to a region near the 5' end of the mRNA where it functions in mRNA export to the cytoplasm via the TAP/NXF1 pathway. Associates with DDX39B, which facilitates RNA binding of DDX39B and likely plays a role in mRNA export. This chain is SAP domain-containing ribonucleoprotein (Sarnp), found in Rattus norvegicus (Rat).